Consider the following 340-residue polypeptide: Ketol-acid reductoisomerase (NADP(+)) (340 aa).

One can recognise a KARI N-terminal Rossmann domain in the interval 3–182 (VTMYYEEDVE…GCARVGIIET (180 aa)). NADP(+) is bound by residues 26 to 29 (YGSQ), R49, S53, and 83 to 86 (DELQ). H108 is a catalytic residue. Residue G134 participates in NADP(+) binding. The KARI C-terminal knotted domain occupies 183–328 (TFKEETEEDL…AELRKAMPFT (146 aa)). Residues D191, E195, E227, and E231 each contribute to the Mg(2+) site. S252 lines the substrate pocket.

Belongs to the ketol-acid reductoisomerase family. It depends on Mg(2+) as a cofactor.

It catalyses the reaction (2R)-2,3-dihydroxy-3-methylbutanoate + NADP(+) = (2S)-2-acetolactate + NADPH + H(+). The catalysed reaction is (2R,3R)-2,3-dihydroxy-3-methylpentanoate + NADP(+) = (S)-2-ethyl-2-hydroxy-3-oxobutanoate + NADPH + H(+). Its pathway is amino-acid biosynthesis; L-isoleucine biosynthesis; L-isoleucine from 2-oxobutanoate: step 2/4. It functions in the pathway amino-acid biosynthesis; L-valine biosynthesis; L-valine from pyruvate: step 2/4. Functionally, involved in the biosynthesis of branched-chain amino acids (BCAA). Catalyzes an alkyl-migration followed by a ketol-acid reduction of (S)-2-acetolactate (S2AL) to yield (R)-2,3-dihydroxy-isovalerate. In the isomerase reaction, S2AL is rearranged via a Mg-dependent methyl migration to produce 3-hydroxy-3-methyl-2-ketobutyrate (HMKB). In the reductase reaction, this 2-ketoacid undergoes a metal-dependent reduction by NADPH to yield (R)-2,3-dihydroxy-isovalerate. In Lactococcus lactis subsp. cremoris (strain MG1363), this protein is Ketol-acid reductoisomerase (NADP(+)).